The chain runs to 404 residues: MEILGGPHFAVAGAGESHGPAVTTIIHGSPPGFRIRRCDVQPFLDRRRPGGNKHGTPRNEKDKVVFLAGLYRDDTDALLTGSKLTVDVDDQSFETEGYEDGFTTGEPIAAIVLSTSKKSGDYTQFSGPTGEVRPGHTDLVKFHQSKGFVDVRGGGRSSYRSTITDVIGGSVARIILRECFGTRFVSSICQVGSLKSKQSLADTLTIDNIDEIETSLGEAEIASIDHEFANEAGELIKETRKRGNSLGAAVEVVAVGVPPLLGQPLYQSLKVRLMGALGGLNAVQSCEIGSGVDVIPRTGSENNDPIRSSGYQSNTHGGLLGGITTGSPLVARVGFKPTSTINLPQDSVNKRLDEIEFELAKGRHDPCVGVRAGVTLESRMAIELLNSVLAYQATAHCGDSIKLF.

Residue Arg-47 participates in NADP(+) binding. FMN-binding positions include 156–158, 281–282, Gly-321, 336–340, and Arg-363; these read RSS, NA, and KPTST.

The protein belongs to the chorismate synthase family. As to quaternary structure, homotetramer. Requires FMNH2 as cofactor.

The catalysed reaction is 5-O-(1-carboxyvinyl)-3-phosphoshikimate = chorismate + phosphate. Its pathway is metabolic intermediate biosynthesis; chorismate biosynthesis; chorismate from D-erythrose 4-phosphate and phosphoenolpyruvate: step 7/7. In terms of biological role, catalyzes the anti-1,4-elimination of the C-3 phosphate and the C-6 proR hydrogen from 5-enolpyruvylshikimate-3-phosphate (EPSP) to yield chorismate, which is the branch point compound that serves as the starting substrate for the three terminal pathways of aromatic amino acid biosynthesis. This reaction introduces a second double bond into the aromatic ring system. The sequence is that of Chorismate synthase from Rhodopirellula baltica (strain DSM 10527 / NCIMB 13988 / SH1).